Consider the following 308-residue polypeptide: Acetylglutamate kinase (308 aa).

Substrate is bound by residues 64-65 (GG), Arg86, and Asn192.

It belongs to the acetylglutamate kinase family. ArgB subfamily.

The protein resides in the cytoplasm. The catalysed reaction is N-acetyl-L-glutamate + ATP = N-acetyl-L-glutamyl 5-phosphate + ADP. It functions in the pathway amino-acid biosynthesis; L-arginine biosynthesis; N(2)-acetyl-L-ornithine from L-glutamate: step 2/4. In terms of biological role, catalyzes the ATP-dependent phosphorylation of N-acetyl-L-glutamate. The polypeptide is Acetylglutamate kinase (Myxococcus xanthus (strain DK1622)).